A 287-amino-acid chain; its full sequence is MANITDFTEKQFEDRLEKNVERLTKNRLAVESPTAFLLGGQPGSGKTSLRSAISEETQGNVVIIDNDTFKQQHPNFDELVKLYEKDVVKYVTPYSNRMTEAIISRLRDKGYNLVIEGTGRTTDVPIQTATMLQAKDYETKMYVMAVPKINSYLGTIERYETMYADDPMTARATPKQAHDIVVKNLPTNLETLHKTGLFSDIRLYNREGVKLYSSLETPSISPKETLERELNRKVSGKEIQPTLERIEQKMVQNQHQETPEFKAIQQKMESLQPPTPPIPKTPKLPGI.

40-47 provides a ligand contact to ATP; it reads GQPGSGKT. Residues 250–287 form a disordered region; the sequence is MVQNQHQETPEFKAIQQKMESLQPPTPPIPKTPKLPGI. The segment covering 273-287 has biased composition (pro residues); sequence PPTPPIPKTPKLPGI.

Belongs to the zeta toxin family. In terms of assembly, in the presence of the epsilon antitoxin, forms an inactive PezA(2)PezT(2) heterotetramer.

It catalyses the reaction UDP-N-acetyl-alpha-D-glucosamine + ATP = UDP-N-acetyl-alpha-D-glucosamine 3'-phosphate + ADP + H(+). Functionally, toxic component of a type II toxin-antitoxin (TA) system. Phosphorylates UDP-N-acetyl-D-glucosamine (UNAG) on the 3'-hydroxyl group of the N-acetyl-D-glucosamine moiety, yielding UNAG-3P. UNAG-3P inhibits MurA, the first committed step in cell wall synthesis, which is then blocked. Phosphorylation is inhibited by cognate epsilon antitoxin. Part of a postsegregational killing (PSK) system involved in the killing of plasmid-free cells. The zeta toxin induces programmed cell death. In Streptococcus agalactiae, this protein is Toxin zeta.